The sequence spans 524 residues: Putative ribose/galactose/methyl galactoside import ATP-binding protein 1 (524 aa).

ABC transporter domains lie at 35 to 271 (LEVR…VGRE) and 281 to 520 (VPIG…RIMD). 67–74 (GENGAGKS) is a binding site for ATP.

This sequence belongs to the ABC transporter superfamily. Carbohydrate importer 2 (CUT2) (TC 3.A.1.2) family.

Its subcellular location is the cell inner membrane. It catalyses the reaction D-ribose(out) + ATP + H2O = D-ribose(in) + ADP + phosphate + H(+). It carries out the reaction D-galactose(out) + ATP + H2O = D-galactose(in) + ADP + phosphate + H(+). Functionally, part of an ABC transporter complex involved in carbohydrate import. Could be involved in ribose, galactose and/or methyl galactoside import. Responsible for energy coupling to the transport system. The chain is Putative ribose/galactose/methyl galactoside import ATP-binding protein 1 from Burkholderia cenocepacia (strain HI2424).